Here is a 1461-residue protein sequence, read N- to C-terminus: Formin-3 (1461 aa).

2 disordered regions span residues 1 to 67 (MASK…SDDN) and 431 to 457 (YREE…RPTT). A compositionally biased stretch (low complexity) spans 12–28 (TSRSIQSRNSSYSTSSN). 2 stretches are compositionally biased toward polar residues: residues 29–53 (ERIG…STND) and 438–457 (PHGN…RPTT). The GBD/FH3 domain maps to 92 to 508 (SETEQLRKIY…KIQKSMQLLT (417 aa)). The segment at 137–515 (QHTVLDEATY…LLTHTLEALE (379 aa)) is interaction with tea4. Residues 540 to 639 (GTAEEIAEYK…VQNSNEQHLQ (100 aa)) are a coiled coil. Residues 683 to 811 (GIPVRVHTPS…EPKIDETSLT (129 aa)) form a disordered region. Low complexity predominate over residues 700–718 (SFSGSEISSSPSPLLPDVS). Positions 731–784 (SPPPPPPAVIVPTPAPAPIPVPPPAPIMGGPPPPPPPPGVAGAGPPPPPPPPPA) are enriched in pro residues. A compositionally biased stretch (basic and acidic residues) spans 801–811 (PEPKIDETSLT). The 413-residue stretch at 845–1257 (LRDLHKPTRP…RIMSEDRDKL (413 aa)) folds into the FH2 domain. Disordered regions lie at residues 1268-1337 (AKYR…AEEK) and 1416-1461 (ERLQ…RQKQ). Composition is skewed to basic and acidic residues over residues 1273-1315 (KREL…KTGD) and 1325-1337 (MEDL…AEEK). The segment covering 1445-1454 (TNGSNASNLV) has biased composition (polar residues).

This sequence belongs to the formin homology family. In terms of assembly, interacts with rax2, rho3 and tea4. Interacts with tea1 in the presence of tea4.

It is found in the cytoplasm. It localises to the cell cortex. The protein localises to the cell tip. Functionally, involved in controlling polarized cell growth. Required for interphase actin cable formation and microtubule organization. This chain is Formin-3 (for3), found in Schizosaccharomyces pombe (strain 972 / ATCC 24843) (Fission yeast).